The chain runs to 288 residues: Putative hydrolase LipZ (288 aa).

Belongs to the AB hydrolase superfamily.

The chain is Putative hydrolase LipZ from Mycobacterium tuberculosis (strain CDC 1551 / Oshkosh).